A 111-amino-acid polypeptide reads, in one-letter code: UPF0060 membrane protein XCC2880 (111 aa).

Transmembrane regions (helical) follow at residues 8 to 28 (LLLF…PYLW), 34 to 54 (SVWL…LLTL), 62 to 82 (VYAA…WWVD), and 91 to 111 (LLGA…PRSG).

This sequence belongs to the UPF0060 family.

It localises to the cell inner membrane. This is UPF0060 membrane protein XCC2880 from Xanthomonas campestris pv. campestris (strain ATCC 33913 / DSM 3586 / NCPPB 528 / LMG 568 / P 25).